The chain runs to 438 residues: POU domain, class 3, transcription factor 3-A (438 aa).

Disordered regions lie at residues 22 to 43 (VHSE…SVSG), 102 to 172 (SPWS…QSQQ), and 186 to 248 (GMLN…PTSD). 2 stretches are compositionally biased toward polar residues: residues 103-123 (PWSS…VKSS) and 146-159 (QSHQ…TASH). Low complexity predominate over residues 160–172 (ISTITGGQQQSQQ). Residues 210–230 (HHHHHHHQQQHPHHHHHHQHH) are compositionally biased toward basic residues. The POU-specific domain occupies 242–316 (EDTPTSDDLE…LLNKWLEEAD (75 aa)). The homeobox DNA-binding region spans 334 to 393 (KRKKRTSIEVSVKGALESHFLKCPKPSAQEITSLADNLQLEKEVVRVWFCNRRQKEKRMT).

The protein belongs to the POU transcription factor family. Class-3 subfamily. In terms of tissue distribution, predominantly expressed in the embryonic and adult central nervous system. In adults, isoform 2 is expressed in the brain, ovary, basal cells of the skin and muscle satellite cells.

It localises to the nucleus. Transcription factor that may play important roles in patterning the embryonic brain. In Danio rerio (Zebrafish), this protein is POU domain, class 3, transcription factor 3-A (pou3f3a).